Reading from the N-terminus, the 252-residue chain is ATP synthase subunit a (252 aa).

Helical transmembrane passes span 29-49, 87-107, 116-136, 146-166, 183-205, and 219-239; these read FTNVSFFIIATVVATSVFLFI, FFPLVFSLFTFILVANFIGLF, QIMITFSLAMLVILTVVGYGF, LFVPSGVPVVILPLVTMIEVI, MLAGHITLKVFSGFIVSMIELGI, and VAITALEFLVAFLQAYVFTVL.

This sequence belongs to the ATPase A chain family. F-type ATPases have 2 components, CF(1) - the catalytic core - and CF(0) - the membrane proton channel. CF(1) has five subunits: alpha(3), beta(3), gamma(1), delta(1), epsilon(1). CF(0) has three main subunits: a(1), b(2) and c(9-12). The alpha and beta chains form an alternating ring which encloses part of the gamma chain. CF(1) is attached to CF(0) by a central stalk formed by the gamma and epsilon chains, while a peripheral stalk is formed by the delta and b chains.

The protein resides in the cell inner membrane. Its function is as follows. Key component of the proton channel; it plays a direct role in the translocation of protons across the membrane. The protein is ATP synthase subunit a of Bartonella quintana (strain Toulouse) (Rochalimaea quintana).